Reading from the N-terminus, the 461-residue chain is 3-isopropylmalate dehydratase large subunit (461 aa).

[4Fe-4S] cluster is bound by residues Cys-338, Cys-398, and Cys-401.

The protein belongs to the aconitase/IPM isomerase family. LeuC type 1 subfamily. As to quaternary structure, heterodimer of LeuC and LeuD. It depends on [4Fe-4S] cluster as a cofactor.

The enzyme catalyses (2R,3S)-3-isopropylmalate = (2S)-2-isopropylmalate. Its pathway is amino-acid biosynthesis; L-leucine biosynthesis; L-leucine from 3-methyl-2-oxobutanoate: step 2/4. Its function is as follows. Catalyzes the isomerization between 2-isopropylmalate and 3-isopropylmalate, via the formation of 2-isopropylmaleate. The sequence is that of 3-isopropylmalate dehydratase large subunit from Streptococcus mutans serotype c (strain ATCC 700610 / UA159).